A 367-amino-acid chain; its full sequence is Secondary metabolism regulator laeA (367 aa).

A disordered region spans residues 1 to 82; the sequence is MFGQQQQQQP…PETYPGHEEN (82 aa). Positions 19 to 41 are enriched in polar residues; sequence LNHNSRWTPPNESAQPRRSSNAM. 2 stretches are compositionally biased toward basic and acidic residues: residues 47 to 56 and 71 to 82; these read TDRDPAEGHP and KSPETYPGHEEN.

Belongs to the methyltransferase superfamily. LaeA methyltransferase family. As to quaternary structure, component of the heterotrimeric velvet complex composed of laeA, veA and velB; VeA acting as a bridging protein between laeA and velB.

The protein resides in the nucleus. It catalyses the reaction L-methionyl-[protein] + S-adenosyl-L-methionine = S-methyl-L-methionyl-[protein] + S-adenosyl-L-homocysteine. Its function is as follows. Methyltransferase that performs automethylation. No other methyl-accepting substrate has been identified yet. Component of the velvet transcription factor complex that acts as a global regulator for secondary metabolite gene expression. Controls the expression of the monacolin K gene clusters. Also regulates pigmentation. The chain is Secondary metabolism regulator laeA from Monascus pilosus (Red mold).